A 626-amino-acid polypeptide reads, in one-letter code: Nuclear receptor subfamily 4 group A member 3 (626 aa).

The segment at methionine 1–histidine 108 is activation function (AF)-1 domain. The required for DNA-PK heterotrimer stretch occupies residues methionine 1 to serine 138. An interaction with NCOA1, NCOA2, NCOA3 and KAT2B region spans residues methionine 1–threonine 291. 3 disordered regions span residues proline 92 to alanine 152, histidine 192 to leucine 211, and proline 265 to serine 284. The segment covering serine 93–glutamine 110 has biased composition (basic residues). Composition is skewed to pro residues over residues proline 140–proline 149 and proline 195–serine 204. The span at serine 268–serine 284 shows a compositional bias: low complexity. A DNA-binding region (nuclear receptor) is located at residues glutamate 289–threonine 364. 2 NR C4-type zinc fingers span residues cysteine 292 to cysteine 312 and cysteine 328 to cysteine 352. Residues threonine 364–proline 394 form a disordered region. Positions lysine 377–serine 387 are enriched in low complexity. An interaction with KAT2B region spans residues lysine 379–phenylalanine 626. The NR LBD domain occupies proline 394–threonine 623.

It belongs to the nuclear hormone receptor family. NR4 subfamily. Interacts with SIX3 (via homeobox); differentially regulates the transcriptional activities of NR4A3. Interacts with the constituents of DNA-PK heterotrimer PRKDC, XRCC6 and XRCC5; phosphorylates and prevents NR4A3 ubiquitinylation and degradation. Interacts with NCOA2; potentiates the activity of the NR4A3. Interacts with NCOA1, NCOA3, MED1 and KAT2B. Interacts with EP300 and NCOA2; mediates the recruitment of MED1 in the coactivator complex. Interacts with NR3C1 (via nuclear receptor DNA-binding domain); the interactions represses transcription activity of NR4A3 on the POMC promoter Nur response element (NurRE). Interacts with TRIM28; the interactions potentiates NR4A3 activity on NurRE promoter. Binds DNA as a monomer and homodimer. Interacts with PARP1; activates PARP1 by improving acetylation of PARP1 and suppressing the interaction between PARP1 and SIRT1. In terms of processing, phosphorylated by PRKDC. In terms of tissue distribution, isoform alpha is highly expressed in skeletal muscle. Isoform beta is highly expressed in skeletal muscle and low expressed in fetal brain and placenta.

The protein resides in the nucleus. Its function is as follows. Transcriptional activator that binds to regulatory elements in promoter regions in a cell- and response element (target)-specific manner. Induces gene expression by binding as monomers to the NR4A1 response element (NBRE) 5'-AAAAGGTCA-3' site and as homodimers to the Nur response element (NurRE) site in the promoter of their regulated target genes. Plays a role in the regulation of proliferation, survival and differentiation of many different cell types and also in metabolism and inflammation. Mediates proliferation of vascular smooth muscle, myeloid progenitor cell and type B pancreatic cells; promotes mitogen-induced vascular smooth muscle cell proliferation through transactivation of SKP2 promoter by binding a NBRE site. Upon PDGF stimulation, stimulates vascular smooth muscle cell proliferation by regulating CCND1 and CCND2 expression. In islets, induces type B pancreatic cell proliferation through up-regulation of genes that activate cell cycle, as well as genes that cause degradation of the CDKN1A. Negatively regulates myeloid progenitor cell proliferation by repressing RUNX1 in a NBRE site-independent manner. During inner ear, plays a role as a key mediator of the proliferative growth phase of semicircular canal development. Also mediates survival of neuron and smooth muscle cells; mediates CREB-induced neuronal survival, and during hippocampus development, plays a critical role in pyramidal cell survival and axonal guidance. Is required for S phase entry of the cell cycle and survival of smooth muscle cells by inducing CCND1, resulting in RB1 phosphorylation. Binds to NBRE motif in CCND1 promoter, resulting in the activation of the promoter and CCND1 transcription. Also plays a role in inflammation; upon TNF stimulation, mediates monocyte adhesion by inducing the expression of VCAM1 and ICAM1 by binding to the NBRE consensus site. In mast cells activated by Fc-epsilon receptor cross-linking, promotes the synthesis and release of cytokines but impairs events leading to degranulation. Also plays a role in metabolism; by modulating feeding behavior; and by playing a role in energy balance by inhibiting the glucocorticoid-induced orexigenic neuropeptides AGRP expression, at least in part by forming a complex with activated NR3C1 on the AGRP- glucocorticoid response element (GRE), and thus weakening the DNA binding activity of NR3C1. Upon catecholamines stimulation, regulates gene expression that controls oxidative metabolism in skeletal muscle. Plays a role in glucose transport by regulating translocation of the SLC2A4 glucose transporter to the cell surface. Finally, during gastrulation plays a crucial role in the formation of anterior mesoderm by controlling cell migration. Inhibits adipogenesis. Also participates in cardiac hypertrophy by activating PARP1. The sequence is that of Nuclear receptor subfamily 4 group A member 3 (NR4A3) from Homo sapiens (Human).